A 151-amino-acid chain; its full sequence is Putative phosphatidylglycerol/phosphatidylinositol transfer protein 3 (151 aa).

The signal sequence occupies residues 1–26 (MKYSQNQIVYVIFFFIILIVVKPIES).

The protein belongs to the NPC2 family. As to quaternary structure, monomer.

Its function is as follows. Catalyzes the intermembrane transfer of phosphatidylglycerol and phosphatidylinositol. The sequence is that of Putative phosphatidylglycerol/phosphatidylinositol transfer protein 3 from Dictyostelium discoideum (Social amoeba).